Reading from the N-terminus, the 128-residue chain is Large ribosomal subunit protein bL12 (128 aa).

In terms of assembly, homodimer. Part of the 50S ribosomal subunit; present in 6 copies per ribosome. Forms part of the ribosomal stalk which helps the ribosome interact with GTP-bound translation factors. Forms a heptameric L10(L12)2(L12)2(L12)2 complex, where L10 forms an elongated spine to which 3 L12 dimers bind in a sequential fashion.

Forms part of the ribosomal stalk which helps the ribosome interact with GTP-bound translation factors. Is thus essential for accurate translation. The sequence is that of Large ribosomal subunit protein bL12 from Thermotoga maritima (strain ATCC 43589 / DSM 3109 / JCM 10099 / NBRC 100826 / MSB8).